The sequence spans 257 residues: MVSSQEKMASISDIIQKDEDSGSEKTESQDKEHPRVLIPELCRLFYKLGWVTGTGGGISLRHGDQIYIAPSGVQKERLQPEDMFVCDVEERDICVPPAWKNLKKGQCTPLFMNAYTMRAAQAVIHTHSKAAVMATLFYPGKEFRITHQEMIKGIRKCTSGTNYRYDETLVVPIIENTPEEQDLKERMALAMEQYPESCAVLVRRHGVYVWGESWEKAKTMCECYDYLFDIAVKMKQCGLDPSAQPVEENLYYYVQQA.

Positions 1–33 (MVSSQEKMASISDIIQKDEDSGSEKTESQDKEH) are disordered. A compositionally biased stretch (basic and acidic residues) spans 15–33 (IQKDEDSGSEKTESQDKEH). Cys107 provides a ligand contact to substrate. Residues His125 and His127 each coordinate Zn(2+). Catalysis depends on Glu149, which acts as the Proton donor/acceptor. A Zn(2+)-binding site is contributed by His205.

The protein belongs to the aldolase class II family. MtnB subfamily. It depends on Zn(2+) as a cofactor.

Its subcellular location is the cytoplasm. The catalysed reaction is 5-(methylsulfanyl)-D-ribulose 1-phosphate = 5-methylsulfanyl-2,3-dioxopentyl phosphate + H2O. It participates in amino-acid biosynthesis; L-methionine biosynthesis via salvage pathway; L-methionine from S-methyl-5-thio-alpha-D-ribose 1-phosphate: step 2/6. In terms of biological role, catalyzes the dehydration of methylthioribulose-1-phosphate (MTRu-1-P) into 2,3-diketo-5-methylthiopentyl-1-phosphate (DK-MTP-1-P). Functions in the methionine salvage pathway. May play a role in apoptosis. The sequence is that of Methylthioribulose-1-phosphate dehydratase from Esox lucius (Northern pike).